The primary structure comprises 470 residues: Cysteine--tRNA ligase (470 aa).

Cysteine 31 is a Zn(2+) binding site. The short motif at 33–43 (PTVYDYVHIGH) is the 'HIGH' region element. Residues cysteine 209, histidine 234, and glutamate 238 each coordinate Zn(2+). The 'KMSKS' region motif lies at 266-270 (KMSKS). Lysine 269 contributes to the ATP binding site.

It belongs to the class-I aminoacyl-tRNA synthetase family. It depends on Zn(2+) as a cofactor.

The protein localises to the cytoplasm. The enzyme catalyses tRNA(Cys) + L-cysteine + ATP = L-cysteinyl-tRNA(Cys) + AMP + diphosphate. This chain is Cysteine--tRNA ligase, found in Saccharolobus solfataricus (strain ATCC 35092 / DSM 1617 / JCM 11322 / P2) (Sulfolobus solfataricus).